A 477-amino-acid polypeptide reads, in one-letter code: Probable cytosolic Fe-S cluster assembly factor GL21135 (477 aa).

[4Fe-4S] cluster-binding residues include Cys23, Cys69, Cys72, Cys75, Cys188, Cys244, Cys396, and Cys400.

This sequence belongs to the NARF family.

Its function is as follows. Component of the cytosolic iron-sulfur (Fe/S) protein assembly machinery. Required for maturation of extramitochondrial Fe/S proteins. The sequence is that of Probable cytosolic Fe-S cluster assembly factor GL21135 from Drosophila persimilis (Fruit fly).